A 276-amino-acid chain; its full sequence is MAIRLYRAYSPGTRSRSSVYYTDITQQKPEKSLVFGKKACSGRNNRGIITLKGRGGAHKRKHRIIDFKRKSIATTARVATIEYDPNRNARIALLHYENGLKRYILAPRSLKVGMEVCSGPEAPIEIGNSLPLAAIPLGSTVHNIELTLGKGGQIARSAGTYAQIIAKEGDFVTLKLPSNEVRLVYKECYATLGQVGNIDAINTCLGKAGRSRWLGKRPKVRGVVKNPIDHPHGGGEGRSPIGRAKPVTPWGQPALGIKTRKKTKASGRYILRGRTK.

The disordered stretch occupies residues 223–254 (VVKNPIDHPHGGGEGRSPIGRAKPVTPWGQPA).

Belongs to the universal ribosomal protein uL2 family. Part of the 50S ribosomal subunit.

The protein resides in the plastid. It localises to the chloroplast. This Emiliania huxleyi (Coccolithophore) protein is Large ribosomal subunit protein uL2c (rpl2).